The following is a 356-amino-acid chain: MADFFAMPLWTDFLWPLIVMVAQSVLLLVVLLIAIAYILLADRKIWAAVQIRRGPNVVGPWGLFQSFADLLKFVLKEPIIPSGANKGVFLLAPLVSCVLALAAWAVIPVNLNWVIADINVGILYIFAISSLSIYGIIMGGWASNSKYPFLAALRSAAQMVSYEVSIGFVIITVLLCAGSLNLSAIVEAQHTSGLATLIGLPWLTFLNWYWLPLLPMFVVFYVSALAETNRPPFDLVEAESELVAGFMVEYGSTPYLLFMLGEYVAITTMCAMGAILFMGGWLPPVDLPPFNWVPGVIWFSLKLFFMFFLIAMAKAIVPRYRYDQLMRLGWKVFLPLSLAMVVIVAAVLQFAGIAPK.

8 consecutive transmembrane segments (helical) span residues 18–38 (IVMVAQSVLLLVVLLIAIAYI), 87–107 (GVFLLAPLVSCVLALAAWAVI), 120–140 (VGILYIFAISSLSIYGIIMGG), 166–186 (IGFVIITVLLCAGSLNLSAIV), 202–222 (WLTFLNWYWLPLLPMFVVFYV), 257–277 (LFMLGEYVAITTMCAMGAILF), 292–312 (WVPGVIWFSLKLFFMFFLIAM), and 333–353 (FLPLSLAMVVIVAAVLQFAGI).

It belongs to the complex I subunit 1 family. In terms of assembly, NDH-1 is composed of 14 different subunits. Subunits NuoA, H, J, K, L, M, N constitute the membrane sector of the complex.

Its subcellular location is the cell inner membrane. It catalyses the reaction a quinone + NADH + 5 H(+)(in) = a quinol + NAD(+) + 4 H(+)(out). NDH-1 shuttles electrons from NADH, via FMN and iron-sulfur (Fe-S) centers, to quinones in the respiratory chain. The immediate electron acceptor for the enzyme in this species is believed to be ubiquinone. Couples the redox reaction to proton translocation (for every two electrons transferred, four hydrogen ions are translocated across the cytoplasmic membrane), and thus conserves the redox energy in a proton gradient. This subunit may bind ubiquinone. The chain is NADH-quinone oxidoreductase subunit H from Nitrobacter winogradskyi (strain ATCC 25391 / DSM 10237 / CIP 104748 / NCIMB 11846 / Nb-255).